Here is a 183-residue protein sequence, read N- to C-terminus: Ribose 1,5-bisphosphate phosphokinase PhnN (183 aa).

An ATP-binding site is contributed by 6-13 (GPSGAGKD).

This sequence belongs to the ribose 1,5-bisphosphokinase family.

It carries out the reaction alpha-D-ribose 1,5-bisphosphate + ATP = 5-phospho-alpha-D-ribose 1-diphosphate + ADP. Its pathway is metabolic intermediate biosynthesis; 5-phospho-alpha-D-ribose 1-diphosphate biosynthesis; 5-phospho-alpha-D-ribose 1-diphosphate from D-ribose 5-phosphate (route II): step 3/3. Functionally, catalyzes the phosphorylation of ribose 1,5-bisphosphate to 5-phospho-D-ribosyl alpha-1-diphosphate (PRPP). The polypeptide is Ribose 1,5-bisphosphate phosphokinase PhnN (Agrobacterium fabrum (strain C58 / ATCC 33970) (Agrobacterium tumefaciens (strain C58))).